The sequence spans 251 residues: Large ribosomal subunit protein uL16m (251 aa).

The transit peptide at 1–29 (MWRLLARASAPLLRVPLSDSWALLPASAG) directs the protein to the mitochondrion.

This sequence belongs to the universal ribosomal protein uL16 family. As to quaternary structure, component of the mitochondrial large ribosomal subunit (mt-LSU). Mature mammalian 55S mitochondrial ribosomes consist of a small (28S) and a large (39S) subunit. The 28S small subunit contains a 12S ribosomal RNA (12S mt-rRNA) and 30 different proteins. The 39S large subunit contains a 16S rRNA (16S mt-rRNA), a copy of mitochondrial valine transfer RNA (mt-tRNA(Val)), which plays an integral structural role, and 52 different proteins.

It is found in the mitochondrion. The sequence is that of Large ribosomal subunit protein uL16m (MRPL16) from Homo sapiens (Human).